The primary structure comprises 331 residues: Major ferric iron-binding protein (331 aa).

Positions 1–22 (MKTSIRYALLAAALTAATPALA) are cleaved as a signal peptide. Fe cation contacts are provided by His-31, Glu-79, Tyr-217, and Tyr-218.

The protein belongs to the bacterial solute-binding protein 1 family.

It is found in the periplasm. Functionally, this protein may be a central component in the iron-acquisition system. The sequence is that of Major ferric iron-binding protein (fbpA) from Neisseria meningitidis serogroup A / serotype 4A (strain DSM 15465 / Z2491).